Reading from the N-terminus, the 153-residue chain is Arachidonate 5-lipoxygenase-activating protein (153 aa).

Topologically, residues M1–N8 are lumenal. The helical transmembrane segment at V9–V30 threads the bilayer. The Cytoplasmic segment spans residues E31–R52. Residues V53–L77 traverse the membrane as a helical segment. Over C78–Q80 the chain is Lumenal. A helical membrane pass occupies residues V81–L102. The Cytoplasmic segment spans residues G103 to Q107. Residues S108–G115 lie within the membrane without spanning it. The chain crosses the membrane as a helical span at residues K116–A128. At G129 to T153 the chain is on the lumenal side.

The protein belongs to the MAPEG family. As to quaternary structure, homotrimer. Interacts with LTC4S and ALOX5.

The protein localises to the nucleus membrane. It localises to the endoplasmic reticulum membrane. Functionally, required for leukotriene biosynthesis by ALOX5 (5-lipoxygenase). Anchors ALOX5 to the membrane. Binds arachidonic acid, and could play an essential role in the transfer of arachidonic acid to ALOX5. Binds to MK-886, a compound that blocks the biosynthesis of leukotrienes. The chain is Arachidonate 5-lipoxygenase-activating protein (ALOX5AP) from Equus caballus (Horse).